Here is a 111-residue protein sequence, read N- to C-terminus: uncharacterized protein (111 aa).

Belongs to the asfivirus E111R family.

This is an uncharacterized protein from African swine fever virus (isolate Pig/Kenya/KEN-50/1950) (ASFV).